We begin with the raw amino-acid sequence, 474 residues long: Bifunctional ribulose 5-phosphate reductase/CDP-ribitol pyrophosphorylase Bcs1 (474 aa).

Residues 1 to 238 (MNKNKNIGII…DKLFQSRSHF (238 aa)) form a ribitol-5-phosphate cytidylyltransferase region. A ribulose-5-phosphate reductase region spans residues 250-474 (YDMKDQVLVV…ITNILADLYK (225 aa)).

The protein in the N-terminal section; belongs to the IspD/TarI cytidylyltransferase family. This sequence in the C-terminal section; belongs to the short-chain dehydrogenases/reductases (SDR) family. In terms of assembly, monomer.

The enzyme catalyses D-ribitol 5-phosphate + CTP + H(+) = CDP-L-ribitol + diphosphate. The catalysed reaction is D-ribitol 5-phosphate + NADP(+) = D-ribulose 5-phosphate + NADPH + H(+). It participates in capsule biogenesis; capsule polysaccharide biosynthesis. Functionally, catalyzes the NADPH-dependent reduction of D-ribulose 5-phosphate to D-ribitol 5-phosphate and the further reaction of D-ribitol 5-phosphate with CTP to form CDP-ribitol. The polypeptide is Bifunctional ribulose 5-phosphate reductase/CDP-ribitol pyrophosphorylase Bcs1 (Haemophilus influenzae).